Here is a 247-residue protein sequence, read N- to C-terminus: 14-3-3 protein gamma-A (247 aa).

It belongs to the 14-3-3 family. Homodimer, and heterodimer with other family members.

It is found in the cytoplasm. Its function is as follows. Adapter protein implicated in the regulation of a large spectrum of both general and specialized signaling pathways. Binds to a large number of partners, usually by recognition of a phosphoserine or phosphothreonine motif. Binding generally results in the modulation of the activity of the binding partner. The chain is 14-3-3 protein gamma-A (ywhag-a) from Xenopus laevis (African clawed frog).